A 455-amino-acid chain; its full sequence is MSFIPHKLEQIKKMLDTIGASSVDQLFDEIPRHLRADTLKIKDGINEIQLANLMRKRANKNHHNTNFIGAGAYSHHIPAAIWDIVARGEFYTAYTPYQAEASQGGLQVIYEFQTMMAGLTGMDASNASMYDGATALAESVLMAIRSNKKAKSQKVLIAEALHPTYLRVLETITKHQGIEFDIINLDSKNGKTDVTKLEDFANTDYAAVVIQSPNFLGQLADVDGITNWAHKHGALVIAVTNPMSLAILKSPAEWGDNGADIVCGEGQPMGVPLASGGPYFGFMTCKMAHVRQMPGRIVGRTVDLDGNEGFCLTLQAREQHIRRAKATSNICTNQGLMVTAATIYMSLLGAEGLERVASISHENTQTLATELAKINGVSIRFNSAFFNEVVIDLPINAETFVTEMEKEGIDAGYFLGEYHSDLANSIMVCATEIHTSEDIKEYIEATKKVLARIGG.

This sequence belongs to the GcvP family. N-terminal subunit subfamily. The glycine cleavage system is composed of four proteins: P, T, L and H. In this organism, the P 'protein' is a heterodimer of two subunits.

The catalysed reaction is N(6)-[(R)-lipoyl]-L-lysyl-[glycine-cleavage complex H protein] + glycine + H(+) = N(6)-[(R)-S(8)-aminomethyldihydrolipoyl]-L-lysyl-[glycine-cleavage complex H protein] + CO2. The glycine cleavage system catalyzes the degradation of glycine. The P protein binds the alpha-amino group of glycine through its pyridoxal phosphate cofactor; CO(2) is released and the remaining methylamine moiety is then transferred to the lipoamide cofactor of the H protein. This chain is Probable glycine dehydrogenase (decarboxylating) subunit 1, found in Francisella tularensis subsp. novicida (strain U112).